Consider the following 83-residue polypeptide: RNA-binding protein Hfq (83 aa).

In terms of domain architecture, Sm spans aspartate 10–valine 69.

This sequence belongs to the Hfq family. In terms of assembly, homohexamer.

RNA chaperone that binds small regulatory RNA (sRNAs) and mRNAs to facilitate mRNA translational regulation in response to envelope stress, environmental stress and changes in metabolite concentrations. Also binds with high specificity to tRNAs. In Paracidovorax citrulli (strain AAC00-1) (Acidovorax citrulli), this protein is RNA-binding protein Hfq.